Reading from the N-terminus, the 216-residue chain is Holliday junction branch migration complex subunit RuvA (216 aa).

Positions 1–64 (MISFIKGVLI…EDAQQLYGFK (64 aa)) are domain I. The segment at 65 to 143 (SKVDKKVFQE…KMANEIYAQT (79 aa)) is domain II. Residues 144–163 (SGTTTTSQDSQAQQAPTSVV) form a flexible linker region. A domain III region spans residues 164 to 216 (LANSIFNESVDALLALGYKQKDAEKMARSAMGDATTAAEVIRKALQGSIKSKR).

The protein belongs to the RuvA family. In terms of assembly, homotetramer. Forms an RuvA(8)-RuvB(12)-Holliday junction (HJ) complex. HJ DNA is sandwiched between 2 RuvA tetramers; dsDNA enters through RuvA and exits via RuvB. An RuvB hexamer assembles on each DNA strand where it exits the tetramer. Each RuvB hexamer is contacted by two RuvA subunits (via domain III) on 2 adjacent RuvB subunits; this complex drives branch migration. In the full resolvosome a probable DNA-RuvA(4)-RuvB(12)-RuvC(2) complex forms which resolves the HJ.

It localises to the cytoplasm. The RuvA-RuvB-RuvC complex processes Holliday junction (HJ) DNA during genetic recombination and DNA repair, while the RuvA-RuvB complex plays an important role in the rescue of blocked DNA replication forks via replication fork reversal (RFR). RuvA specifically binds to HJ cruciform DNA, conferring on it an open structure. The RuvB hexamer acts as an ATP-dependent pump, pulling dsDNA into and through the RuvAB complex. HJ branch migration allows RuvC to scan DNA until it finds its consensus sequence, where it cleaves and resolves the cruciform DNA. In Francisella tularensis subsp. tularensis (strain WY96-3418), this protein is Holliday junction branch migration complex subunit RuvA.